Here is a 1429-residue protein sequence, read N- to C-terminus: uncharacterized protein (1429 aa).

Disordered stretches follow at residues 1 to 76 and 103 to 130; these read MEGE…SGIE and PAGAAESAQNANLISSKSENVPEPAGEK. Low complexity predominate over residues 14–29; sequence SHSTSVVSERASSSGV. Residues 109 to 121 are compositionally biased toward polar residues; it reads SAQNANLISSKSE. Transmembrane regions (helical) follow at residues 197–217 and 225–245; these read LTGQWWQSTSILLAVSILSWI and FFILFFIIITGTIVYGSCMIS. In terms of domain architecture, SMP-LTD spans 266–471; that stretch reads DYETMSWFNT…WPNMFDYDLS (206 aa). C2 domains lie at 462 to 584 and 738 to 858; these read WPNM…GDIY and TPVD…DRSA. Positions 899–932 are disordered; the sequence is NTDNSSKQSSENVQSATDPTTPAKDNSTSNAETS. Positions 1060-1177 constitute a C2 3 domain; sequence TYMPVPMTLN…EPNVESQQSI (118 aa). Positions 1280-1303 are disordered; the sequence is EKNPSRSDLTTTQEASSSASVPPA. Residues 1294-1303 show a composition bias toward low complexity; the sequence is ASSSASVPPA.

It localises to the membrane. This is an uncharacterized protein from Schizosaccharomyces pombe (strain 972 / ATCC 24843) (Fission yeast).